The sequence spans 147 residues: Large ribosomal subunit protein uL13 (147 aa).

Belongs to the universal ribosomal protein uL13 family. In terms of assembly, part of the 50S ribosomal subunit.

Functionally, this protein is one of the early assembly proteins of the 50S ribosomal subunit, although it is not seen to bind rRNA by itself. It is important during the early stages of 50S assembly. The chain is Large ribosomal subunit protein uL13 from Rhodococcus erythropolis (strain PR4 / NBRC 100887).